The primary structure comprises 430 residues: C4-dicarboxylate transport protein (430 aa).

The next 9 helical transmembrane spans lie at 8 to 28, 44 to 64, 76 to 96, 144 to 164, 184 to 204, 222 to 242, 289 to 309, 326 to 346, and 352 to 372; these read SLYF…HFYP, LIKM…IAGM, IALL…LVIV, AFAS…GFAL, VIFG…FGAM, LIIC…GSIA, VVGL…SIYL, VIHQ…AAGV, and IVLA…LALI.

Belongs to the dicarboxylate/amino acid:cation symporter (DAACS) (TC 2.A.23) family.

Its subcellular location is the cell inner membrane. Responsible for the transport of dicarboxylates such as succinate, fumarate, and malate from the periplasm across the membrane. The protein is C4-dicarboxylate transport protein of Yersinia enterocolitica serotype O:8 / biotype 1B (strain NCTC 13174 / 8081).